Reading from the N-terminus, the 89-residue chain is Small ribosomal subunit protein uS17 (89 aa).

It belongs to the universal ribosomal protein uS17 family. In terms of assembly, part of the 30S ribosomal subunit.

One of the primary rRNA binding proteins, it binds specifically to the 5'-end of 16S ribosomal RNA. The chain is Small ribosomal subunit protein uS17 from Leptospira interrogans serogroup Icterohaemorrhagiae serovar Lai (strain 56601).